A 67-amino-acid chain; its full sequence is MMFRLTSVSCFLLVIACLNLFQVVLTRRCFPPGVYCTRHLPCCRGRCCSGWCRPRCFPRYGKRATFQ.

The N-terminal stretch at 1 to 26 (MMFRLTSVSCFLLVIACLNLFQVVLT) is a signal peptide. Disulfide bonds link Cys29-Cys43, Cys36-Cys48, Cys42-Cys52, and Cys47-Cys56. Tyr60 is modified (tyrosine amide). Residues 64 to 67 (ATFQ) constitute a propeptide that is removed on maturation.

Belongs to the conotoxin I2 superfamily. In terms of tissue distribution, expressed by the venom duct.

The protein localises to the secreted. The chain is Conotoxin Cp1.1 from Conus capitaneus (Captain cone).